The sequence spans 334 residues: Meso-diaminopimelate D-dehydrogenase (334 aa).

Residues 16–19 (YGNL), 40–42 (TRR), 75–78 (CSGS), 98–100 (GFD), and 127–131 (CGWDP) each bind NADP(+). Substrate-binding positions include D100, D130, W154, 160–161 (QG), T179, R205, H255, and N284.

The protein belongs to the diaminopimelate dehydrogenase family. In terms of assembly, homodimer.

It catalyses the reaction meso-2,6-diaminopimelate + NADP(+) + H2O = (S)-2-amino-6-oxoheptanedioate + NH4(+) + NADPH + H(+). The protein operates within amino-acid biosynthesis; L-lysine biosynthesis via DAP pathway; DL-2,6-diaminopimelate from (S)-tetrahydrodipicolinate: step 1/1. Its function is as follows. Catalyzes the reversible NADPH-dependent reductive amination of L-2-amino-6-oxopimelate, the acyclic form of L-tetrahydrodipicolinate, to generate the meso compound, D,L-2,6-diaminopimelate. Probably plays a role in lysine biosynthesis. Exhibits a high substrate specificity for meso-2,6-diaminopimelate (m-DAP), since the activity with L,L-2,6-diaminopimelate is less than 5% of the activity observed with m-DAP. Can use NAD(+) only very poorly since the activity observed in the presence of NAD(+) is about 0.3% of that with NADP(+). The sequence is that of Meso-diaminopimelate D-dehydrogenase (ddh) from Acetivibrio thermocellus (strain ATCC 27405 / DSM 1237 / JCM 9322 / NBRC 103400 / NCIMB 10682 / NRRL B-4536 / VPI 7372) (Clostridium thermocellum).